The chain runs to 199 residues: V-type proton ATPase subunit E (199 aa).

The protein belongs to the V-ATPase E subunit family.

Its function is as follows. Produces ATP from ADP in the presence of a proton gradient across the membrane. This Clostridium botulinum (strain Loch Maree / Type A3) protein is V-type proton ATPase subunit E.